Here is a 2357-residue protein sequence, read N- to C-terminus: MQPPPQTVPSGMAGPPPAGNPRSVFWASSPYRRRANNNAAVAPTTCPLQPVTDPFAFSRQALQSTPLGSSSKSSPPVLQGPAPAGFSQHPGLLVPHTHARDSSQGPCEPLPGPLTQPRAHASPFSGALTPSAPPGPEMNRSAEVGPSSEPEVQTLPYLPHYIPGVDPETSHGGHPHGNMPGLDRPLSRQNPHDGVVTPAASPSLPQPGLQMPGQWGPVQGGPQPSGQHRSPCPEGPVPSGVPCATSVPHFPTPSILHQGPGHEQHSPLVAPPAALPSDGRDEVSHLQSGSHLANNSDPESTFRQNPRIVNHWASPELRQNPGVKNEHRPASALVNPLARGDSPENRTHHPLGAGAGSGCAPLEADSGASGALAMFFQGGETENEENLSSEKAGLSGQADFDDFCSSPGLGRPPAPTHVGAGSLCQALLPGPSNEAAGDVWGDTASTGVPDASGSQYENVENLEFVQNQEVLPSEPLNLDPSSPSDQFRYGPLPGPAVPRHGAVCHTGAPDATLHTVHPDSVSSSYSSRSHGRLSGSARPQELVGTFIQQEVGKPEDEASGSFFKQIDSSPVGGETDETTVSQNYRGSVSQPSTPSPPKPTGIFQTSANSSFEPVKSHLVGVKPFEADRANVVGEVRETCVRQKQCRPAAALPDASPGNLEQPPDNMETLCAPQVCPLPLNSTTEAVHMLPHAGAPPLDTVYPAPEKRPSARTQGPVKCESPATTLWAQSELPDFGGNVLLAPAAPALYVCAKPQPPVVQPPEEAMSGQQSRNPSSAAPVQSRGGIGASENLENPPKMGEEEALQSQASSGYASLLSSPPTESLQNPPVLIAQPDHSYNLAQPINFSVSLSNSHEKNQSWREALVGDRPAVSSWALGGDSGENTSLSGIPTSSVLSLSLPSSVAQSNFPQGSGASEMVSNQPANLLVQPPSQPVPENLVPESQKDRKAGSALPGFANSPAGSTSVVLVPPAHGTLVPDGNKANHSSHQEDTYGALDFTLSRTLENPVNVYNPSHSDSLASQQSVASHPRQSGPGAPNLDRFYQQVTKDAQGQPGLERAQQELVPPQQQASPPQLPKAMFSELSNPESLPAQGQAQNSAQSPASLVLVDAGQQLPPRPPQSSSVSLVSSGSGQAAVPSEQPWPQPVPALAPGPPPQDLAAYYYYRPLYDAYQPQYSLPYPPEPGAASLYYQDVYSLYEPRYRPYDGAASAYAQNYRYPEPERPSSRASHSSERPPPRQGYPEGYYSSKSGWSSQSDYYASYYSSQYDYGDPGHWDRYHYSARVRDPRTYDRRYWCDAEYDAYRREHSAFGDRPEKRDNNWRYDPRFTGSFDDDPDPHRDPYGEEVDRRSVHSEHSARSLHSAHSLASRRSSLSSHSHQSQIYRSHNVAAGSYEAPLPPGSFHGDFAYGTYRSNFSSGPGFPEYGYPADTVWPAMEQVSSRPTSPEKFSVPHVCARFGPGGQLIKVIPNLPSEGQPALVEVHSMEALLQHTSEQEEMRAFPGPLAKDDTHKVDVINFAQNKAMKCLQNENLIDKESASLLWNFIVLLCRQNGTVVGTDIAELLLRDHRTVWLPGKSPNEANLIDFTNEAVEQVEEEESGEAQLSFLTGGPAAAASSLERETERFRELLLYGRKKDALESAMKNGLWGHALLLASKMDSRTHARVMTRFANSLPINDPLQTVYQLMSGRMPAASTCCGDEKWGDWRPHLAMVLSNLNNNMDVESRTMATMGDTLASRGLLDAAHFCYLMAQAGFGVYTKKTTKLVLIGSNHSLPFLKFATNEAIQRTEAYEYAQSLGAETCPLPSFQVFKFIYSCRLAEMGLATQAFHYCEAIAKSILTQPHLYSPVLISQLVQMASQLRLFDPQLKEKPEEESLAAPTWLVHLQQVERQIKEGAGVWHQDGALPQQCPGTPSSEMEQLDRPGLSQPGALGIANPLLAVPAPSPEHSSPSVRLLPSAPQTLPDGPLASPARVPMFPVPLPPGPLEPGPGCVTPGPALGFLEPSGPGLPPGVPPLQERRHLLQEARSPDPGIVPQEAPVGNSLSELSEENFDGKFANLTPSRTVPDSEAPPGWDRADSGPTQPPLSLSPAPETKRPGQAAKKETKEPKKGESWFFRWLPGKKKTEAYLPDDKNKSIVWDEKKNQWVNLNEPEEEKKAPPPPPTSMPKTVQAAPPALPGPPGAPVNMYSRRAAGTRARYVDVLNPSGTQRSEPALAPADFVAPLAPLPIPSNLFVPTPDAEEPQLPDGTGREGPAAARGLANPEPAPEPKVLSSAASLPGSELPSSRPEGSQGGELSRCSSMSSLSREVSQHFNQAPGDLPAAGGPPSGAMPFYNPAQLAQACATSGSSRLGRIGQRKHLVLN.

2 disordered regions span residues 1 to 25 (MQPPPQTVPSGMAGPPPAGNPRSVF) and 57 to 303 (FSRQ…STFR). 2 stretches are compositionally biased toward low complexity: residues 64 to 76 (STPLGSSSKSSPP) and 210 to 227 (QMPGQWGPVQGGPQPSGQ). Residues 285-303 (HLQSGSHLANNSDPESTFR) are compositionally biased toward polar residues. A phosphoserine mark is found at Ser-296, Ser-314, and Ser-331. 7 disordered regions span residues 335–359 (NPLARGDSPENRTHHPLGAGAGSGC), 508–540 (APDATLHTVHPDSVSSSYSSRSHGRLSGSARPQ), 553–603 (KPED…TGIF), 758–828 (VQPP…NPPV), 924–987 (LLVQ…SSHQ), 1006–1038 (VNVYNPSHSDSLASQQSVASHPRQSGPGAPNLD), and 1059–1151 (QELV…APGP). The segment covering 520–536 (SVSSSYSSRSHGRLSGS) has biased composition (low complexity). Ser-559, Ser-569, Ser-587, Ser-589, and Ser-592 each carry phosphoserine. Thr-593 bears the Phosphothreonine mark. Ser-595 carries the post-translational modification Phosphoserine. 2 stretches are compositionally biased toward polar residues: residues 766-778 (SGQQSRNPSSAAP) and 803-825 (LQSQASSGYASLLSSPPTESLQN). The span at 1006–1028 (VNVYNPSHSDSLASQQSVASHPR) shows a compositional bias: polar residues. Residues 1019-1890 (SQQSVASHPR…QQVERQIKEG (872 aa)) are required for localization to endoplasmic reticulum exit sites. The residue at position 1069 (Ser-1069) is a Phosphoserine. A compositionally biased stretch (polar residues) spans 1080–1101 (ELSNPESLPAQGQAQNSAQSPA). The interaction with MIA3 stretch occupies residues 1101-1400 (ASLVLVDAGQ…EAPLPPGSFH (300 aa)). The tract at residues 1102–1405 (SLVLVDAGQQ…PGSFHGDFAY (304 aa)) is required for endoplasmic reticulum localization. The segment covering 1118–1131 (QSSSVSLVSSGSGQ) has biased composition (low complexity). The segment covering 1138–1151 (QPWPQPVPALAPGP) has biased composition (pro residues). 3 positions are modified to phosphoserine: Ser-1207, Ser-1229, and Ser-1305. A disordered region spans residues 1215–1248 (YPEPERPSSRASHSSERPPPRQGYPEGYYSSKSG). The span at 1216–1233 (PEPERPSSRASHSSERPP) shows a compositional bias: basic and acidic residues. Residues 1307–1322 (FGDRPEKRDNNWRYDP) show a composition bias toward basic and acidic residues. The segment at 1307–1378 (FGDRPEKRDN…SLSSHSHQSQ (72 aa)) is disordered. Residue Thr-1325 is modified to Phosphothreonine. Phosphoserine occurs at positions 1327, 1347, 1350, 1356, 1359, 1362, 1369, 1573, and 1601. Positions 1333-1354 (DPHRDPYGEEVDRRSVHSEHSA) are enriched in basic and acidic residues. The span at 1356–1375 (SLHSAHSLASRRSSLSSHSH) shows a compositional bias: low complexity. The segment at 1434–1890 (QVSSRPTSPE…QQVERQIKEG (457 aa)) is central conserved domain (CCD); mediates interaction with RNF183, LRRK2 and SEC13. Phosphothreonine is present on Thr-1907. 4 positions are modified to phosphoserine: Ser-1939, Ser-1964, Ser-2022, and Ser-2042. Disordered stretches follow at residues 2049–2110 (KFAN…SWFF), 2141–2181 (VNLN…PVNM), and 2226–2328 (NLFV…MPFY). Position 2054 is a phosphothreonine (Thr-2054). Phosphoserine occurs at positions 2056, 2073, and 2083. Residues 2087-2106 (ETKRPGQAAKKETKEPKKGE) are compositionally biased toward basic and acidic residues. Positions 2106–2357 (ESWFFRWLPG…IGQRKHLVLN (252 aa)) are required for interaction with SEC23A. 2 positions are modified to phosphoserine: Ser-2271 and Ser-2291. Low complexity-rich tracts occupy residues 2289–2302 (ELSRCSSMSSLSRE) and 2310–2324 (APGDLPAAGGPPSGA).

This sequence belongs to the SEC16 family. In terms of assembly, SEC16A and SEC16B are each present in multiple copies in a heteromeric complex. Interacts with SEC23A. Interacts with RNF183 and RNF152. Interacts with LRRK2 (via ROC domain). Interacts with SEC13. Interacts with RAB10. Interacts with MIA3. Interacts with GORASP2 in response to ER stress. In terms of tissue distribution, ubiquitous. Expressed at higher levels in the pancreas.

The protein resides in the endoplasmic reticulum membrane. The protein localises to the golgi apparatus membrane. It localises to the cytoplasm. It is found in the perinuclear region. Its subcellular location is the cytosol. The protein resides in the microsome membrane. In terms of biological role, acts as a molecular scaffold that plays a key role in the organization of the endoplasmic reticulum exit sites (ERES), also known as transitional endoplasmic reticulum (tER). SAR1A-GTP-dependent assembly of SEC16A on the ER membrane forms an organized scaffold defining an ERES. Required for secretory cargo traffic from the endoplasmic reticulum to the Golgi apparatus. Mediates the recruitment of MIA3/TANGO to ERES. Regulates both conventional (ER/Golgi-dependent) and GORASP2-mediated unconventional (ER/Golgi-independent) trafficking of CFTR to cell membrane. Positively regulates the protein stability of E3 ubiquitin-protein ligases RNF152 and RNF183 and the ER localization of RNF183. Acts as a RAB10 effector in the regulation of insulin-induced SLC2A4/GLUT4 glucose transporter-enriched vesicles delivery to the cell membrane in adipocytes. This is Protein transport protein Sec16A (SEC16A) from Homo sapiens (Human).